A 278-amino-acid chain; its full sequence is S-formylglutathione hydrolase YeiG (278 aa).

Active-site charge relay system residues include S145, D223, and H256.

This sequence belongs to the esterase D family.

It catalyses the reaction S-formylglutathione + H2O = formate + glutathione + H(+). In terms of biological role, serine hydrolase involved in the detoxification of formaldehyde. Hydrolyzes S-formylglutathione to glutathione and formate. In Shigella boydii serotype 4 (strain Sb227), this protein is S-formylglutathione hydrolase YeiG (yeiG).